The following is a 323-amino-acid chain: Serine/threonine-protein phosphatase PP1-gamma catalytic subunit (323 aa).

Aspartate 64, histidine 66, aspartate 92, and asparagine 124 together coordinate Mn(2+). The active-site Proton donor is the histidine 125. Mn(2+) contacts are provided by histidine 173 and histidine 248. The disordered stretch occupies residues 300–323; sequence EKKKPNASRPVTPPRGMITKQAKK.

The protein belongs to the PPP phosphatase family. PP-1 subfamily. As to quaternary structure, PP1 comprises a catalytic subunit, ppp1c1, ppp1cb or ppp1cc, which is folded into its native form by inhibitor 2 and glycogen synthetase kinase 3, and then is complexed to one or several targeting or regulatory subunits. Mn(2+) is required as a cofactor.

It is found in the cytoplasm. The protein localises to the nucleus. It localises to the cleavage furrow. Its subcellular location is the nucleolus. The protein resides in the nucleoplasm. It is found in the chromosome. The protein localises to the centromere. It localises to the kinetochore. Its subcellular location is the nucleus speckle. The protein resides in the midbody. It is found in the mitochondrion. The protein localises to the cytoskeleton. It localises to the microtubule organizing center. The catalysed reaction is O-phospho-L-seryl-[protein] + H2O = L-seryl-[protein] + phosphate. It catalyses the reaction O-phospho-L-threonyl-[protein] + H2O = L-threonyl-[protein] + phosphate. In terms of biological role, protein phosphatase 1 (PP1) is essential for cell division, and participates in the regulation of glycogen metabolism, muscle contractility and protein synthesis. Promotes nuclear envelope reassembly by targeting nuclear membrane vesicles to chromatin at the end of mitosis. Acts by dephosphorylating membrane proteins such as lamin B receptor (lbr) to regulate the binding of membrane proteins to chromatin. The polypeptide is Serine/threonine-protein phosphatase PP1-gamma catalytic subunit (Xenopus tropicalis (Western clawed frog)).